Here is a 72-residue protein sequence, read N- to C-terminus: uncharacterized protein (72 aa).

Transmembrane regions (helical) follow at residues W15 to I35 and I50 to I70.

It is found in the host membrane. This is an uncharacterized protein from Spiroplasma melliferum (SpV1).